A 163-amino-acid polypeptide reads, in one-letter code: SsrA-binding protein (163 aa).

It belongs to the SmpB family.

The protein localises to the cytoplasm. Its function is as follows. Required for rescue of stalled ribosomes mediated by trans-translation. Binds to transfer-messenger RNA (tmRNA), required for stable association of tmRNA with ribosomes. tmRNA and SmpB together mimic tRNA shape, replacing the anticodon stem-loop with SmpB. tmRNA is encoded by the ssrA gene; the 2 termini fold to resemble tRNA(Ala) and it encodes a 'tag peptide', a short internal open reading frame. During trans-translation Ala-aminoacylated tmRNA acts like a tRNA, entering the A-site of stalled ribosomes, displacing the stalled mRNA. The ribosome then switches to translate the ORF on the tmRNA; the nascent peptide is terminated with the 'tag peptide' encoded by the tmRNA and targeted for degradation. The ribosome is freed to recommence translation, which seems to be the essential function of trans-translation. The polypeptide is SsrA-binding protein (Shewanella baltica (strain OS223)).